Consider the following 295-residue polypeptide: Sulfotransferase 1 family member D1 (295 aa).

48–53 lines the 3'-phosphoadenylyl sulfate pocket; that stretch reads KSGTTW. Residues phenylalanine 81 and 106–108 contribute to the substrate site; that span reads KTH. The active-site Proton acceptor is histidine 108. 3'-phosphoadenylyl sulfate-binding residues include arginine 130 and serine 138. Phenylalanine 142 contacts substrate. 3'-phosphoadenylyl sulfate contacts are provided by residues tyrosine 193, 227 to 232, and 257 to 259; these read SSFSVM and RKG.

It belongs to the sulfotransferase 1 family. In terms of tissue distribution, detected in kidney and liver. Detected in kidney collecting duct cells.

It localises to the cytoplasm. Functionally, sulfotransferase with broad substrate specificity that utilizes 3'-phospho-5'-adenylyl sulfate (PAPS) as sulfonate donor to catalyze the sulfate conjugation of catecholamines, such as dopamine, prostaglandins, leukotriene E4, drugs and xenobiotic compounds. Has sulfotransferase activity towards p-nitrophenol, 2-naphthylamine and minoxidil (in vitro). Sulfonation increases the water solubility of most compounds, and therefore their renal excretion, but it can also result in bioactivation to form active metabolites. The protein is Sulfotransferase 1 family member D1 (Sult1d1) of Mus musculus (Mouse).